The sequence spans 903 residues: MAERPARRAPPARALLLALAGALLAPRAARGMSLWDQRGTYEVARASLLSKDPGIPGQSIPAKDHPDVLTVQLQLESRDLILSLERNEGLIANGFTETHYLQDGTDVSLTRNHTDHCYYHGHVQGDAASVVSLSTCSGLRGLIMFENKTYSLEPMKNTTDSYKLVPAESMTNIQGLCGSQHNKSNLTMEDVSPGTSQMRARRHKRETLKMTKYVELVIVADNREFQRQGKDLEKVKQRLIEIANHVDKFYRPLNIRIVLVGVEVWNDIDKCSISQDPFTSLHEFLDWRKIKLLPRKSHDNAQLISGVYFQGTTIGMAPIMSMCTAEQSGGVVMDHSDSPLGAAVTLAHELGHNFGMNHDTLERGCSCRMAAEKGGCIMNPSTGFPFPMVFSSCSRKDLEASLEKGMGMCLFNLPEVKQAFGGRKCGNGYVEEGEECDCGEPEECTNRCCNATTCTLKPDAVCAHGQCCEDCQLKPPGTACRGSSNSCDLPEFCTGTAPHCPANVYLHDGHPCQGVDGYCYNGICQTHEQQCVTLWGPGAKPAPGICFERVNSAGDPYGNCGKDSKSAFAKCELRDAKCGKIQCQGGASRPVIGTNAVSIETNIPQQEGGRILCRGTHVYLGDDMPDPGLVLAGTKCAEGKICLNRRCQNISVFGVHKCAMQCHGRGVCNNRKNCHCEAHWAPPFCDKFGFGGSTDSGPIRQADNQGLTVGILVSILCLLAAGFVVYLKRKTLMRLLFTHKKTTMEKLRCVHPSRTPSGPHLGQAHHTPGKGLLMNRAPHFNTPKDRHSLKCQNMDISRPLDARAVPQLQSPQRVLLPLHQTPRAPSGPARPLPASPAVRQAQGIRKPSPPQKPLPADPLSRTSRLTSALVRTPGQQEPGHRPAPIRPAPKHQVPRPSHNAYIK.

An N-terminal signal peptide occupies residues Met1–Gly31. A propeptide spanning residues Met32–Arg205 is cleaved from the precursor. N-linked (GlcNAc...) asparagine glycosylation is found at Asn112, Asn147, and Asn157. A Cysteine switch motif is present at residues Gly175–Asn182. Residue Cys177 participates in Zn(2+) binding. N-linked (GlcNAc...) asparagine glycans are attached at residues Asn182 and Asn185. Topologically, residues Glu206–Gly706 are extracellular. The 203-residue stretch at Lys212–Pro414 folds into the Peptidase M12B domain. Intrachain disulfides connect Cys323-Cys409, Cys365-Cys393, and Cys367-Cys376. His348 serves as a coordination point for Zn(2+). Residue Glu349 is part of the active site. Residues His352 and His358 each contribute to the Zn(2+) site. The Disintegrin domain maps to Gly422–Asp508. N-linked (GlcNAc...) asparagine glycosylation occurs at Asn450. Residues Cys480 and Cys500 are joined by a disulfide bond. N-linked (GlcNAc...) asparagine glycosylation is present at Asn649. The EGF-like domain occupies Gly654–Asp686. 3 cysteine pairs are disulfide-bonded: Cys658-Cys668, Cys662-Cys674, and Cys676-Cys685. A helical transmembrane segment spans residues Leu707–Leu727. Topologically, residues Lys728–Lys903 are cytoplasmic. Disordered stretches follow at residues Ser753–Lys790 and His819–Lys903. 2 consecutive short sequence motifs (SH3-binding; class II) follow at residues Ala824–Arg830 and Lys846–Lys852. 3 short sequence motifs (SH3-binding; class I) span residues Arg830 to Ala837, Lys852 to Pro858, and Arg881 to Pro887. Over residues Pro847–Ala856 the composition is skewed to pro residues. Tyr901 bears the Phosphotyrosine; by SRC mark.

In terms of assembly, interacts with alpha-actinin-2 and with syndecans. Interacts with SH3PXD2A. Interacts with FST3. Interacts with RACK1; the interaction is required for PKC-dependent translocation of ADAM12 to the cell membrane. It depends on Zn(2+) as a cofactor. Post-translationally, the precursor is cleaved by a furin endopeptidase. In terms of tissue distribution, expressed during early developing mesenchymal cells that give rise to skeletal muscle, bones and visceral organs. Not expressed in adult normal muscle but expressed in regenerating muscle.

It is found in the membrane. Involved in skeletal muscle regeneration, specifically at the onset of cell fusion. Also involved in macrophage-derived giant cells (MGC) and osteoclast formation from mononuclear precursors. The protein is Disintegrin and metalloproteinase domain-containing protein 12 (Adam12) of Mus musculus (Mouse).